Here is a 276-residue protein sequence, read N- to C-terminus: Ribosomal RNA small subunit methyltransferase A (276 aa).

Residues Asn-27, Leu-29, Gly-54, Glu-75, Asp-101, and Asn-122 each coordinate S-adenosyl-L-methionine.

Belongs to the class I-like SAM-binding methyltransferase superfamily. rRNA adenine N(6)-methyltransferase family. RsmA subfamily.

The protein localises to the cytoplasm. The enzyme catalyses adenosine(1518)/adenosine(1519) in 16S rRNA + 4 S-adenosyl-L-methionine = N(6)-dimethyladenosine(1518)/N(6)-dimethyladenosine(1519) in 16S rRNA + 4 S-adenosyl-L-homocysteine + 4 H(+). Specifically dimethylates two adjacent adenosines (A1518 and A1519) in the loop of a conserved hairpin near the 3'-end of 16S rRNA in the 30S particle. May play a critical role in biogenesis of 30S subunits. This Brucella abortus (strain S19) protein is Ribosomal RNA small subunit methyltransferase A.